The following is an 813-amino-acid chain: Phosphoribosylformylglycinamidine synthase subunit PurL (813 aa).

Residue H56 is part of the active site. Residues Y59 and K103 each coordinate ATP. Residue E105 coordinates Mg(2+). Residues 106 to 109 and R128 contribute to the substrate site; that span reads SHNH. The active-site Proton acceptor is the H107. D129 contacts Mg(2+). Q253 contributes to the substrate binding site. D281 lines the Mg(2+) pocket. Substrate is bound at residue 325-327; sequence ESQ. Residues N511 and G548 each contribute to the ATP site. Residue N549 coordinates Mg(2+). Residue S551 participates in substrate binding.

Belongs to the FGAMS family. As to quaternary structure, monomer. Part of the FGAM synthase complex composed of 1 PurL, 1 PurQ and 2 PurS subunits.

Its subcellular location is the cytoplasm. It carries out the reaction N(2)-formyl-N(1)-(5-phospho-beta-D-ribosyl)glycinamide + L-glutamine + ATP + H2O = 2-formamido-N(1)-(5-O-phospho-beta-D-ribosyl)acetamidine + L-glutamate + ADP + phosphate + H(+). Its pathway is purine metabolism; IMP biosynthesis via de novo pathway; 5-amino-1-(5-phospho-D-ribosyl)imidazole from N(2)-formyl-N(1)-(5-phospho-D-ribosyl)glycinamide: step 1/2. In terms of biological role, part of the phosphoribosylformylglycinamidine synthase complex involved in the purines biosynthetic pathway. Catalyzes the ATP-dependent conversion of formylglycinamide ribonucleotide (FGAR) and glutamine to yield formylglycinamidine ribonucleotide (FGAM) and glutamate. The FGAM synthase complex is composed of three subunits. PurQ produces an ammonia molecule by converting glutamine to glutamate. PurL transfers the ammonia molecule to FGAR to form FGAM in an ATP-dependent manner. PurS interacts with PurQ and PurL and is thought to assist in the transfer of the ammonia molecule from PurQ to PurL. This Corynebacterium jeikeium (strain K411) protein is Phosphoribosylformylglycinamidine synthase subunit PurL.